The following is a 545-amino-acid chain: Carboxypeptidase N subunit 2 (545 aa).

A signal peptide spans 1–21; that stretch reads MLPGAWLLWTSLLLLARPAQP. The LRRNT domain occupies 22–49; that stretch reads CPMGCDCFVQEVFCSDEELATVPLDIPP. N-linked (GlcNAc...) asparagine glycosylation is found at Asn74, Asn111, and Asn119. LRR repeat units lie at residues 98-119, 122-143, 146-167, 170-191, 194-215, 218-239, 242-263, 266-287, 290-311, 314-335, 338-359, and 362-383; these read RLEDLEVTGSSFLNLSTNIFSN, SLGKLTLNFNMLEALPEGLFQH, ALESLHLQGNQLQALPRRLFQP, HLKTLNLAQNLLAQLPEELFHP, SLQTLKLSNNALSGLPQGVFGK, SLQELFLDSNNISELPPQVFSQ, CLERLWLQRNAITHLPLSIFAS, NLTFLSLQWNMLRVLPAGLFAH, CLVGLSLTHNQLETVAEGTFAH, NLRSLMLSYNAITHLPAGIFRD, ELVKLYLGSNNLTALHPALFQN, and KLELLSLSKNQLTTLPEGIFDT. N-linked (GlcNAc...) asparagine glycosylation is present at Asn228. A glycan (N-linked (GlcNAc...) asparagine) is linked at Asn266. 2 N-linked (GlcNAc...) asparagine glycosylation sites follow: Asn348 and Asn359. Residues 395–447 enclose the LRRCT domain; that stretch reads NPWQCDCHLAYLFNWLQQYTDRLLNIQTYCAGPAYLKGQVVPALNEKQLVCPV. A glycan (N-linked (GlcNAc...) asparagine) is linked at Asn518.

Tetramer of two catalytic chains and two glycosylated inactive chains. Whether or not any Cys residues participate in intrachain bonds is unknown, but they do not form interchain disulfide bonds with the 50 kDa catalytic subunit.

It is found in the secreted. The 83 kDa subunit binds and stabilizes the catalytic subunit at 37 degrees Celsius and keeps it in circulation. Under some circumstances it may be an allosteric modifier of the catalytic subunit. The protein is Carboxypeptidase N subunit 2 (CPN2) of Homo sapiens (Human).